The chain runs to 540 residues: uncharacterized protein (540 aa).

Residues 1–61 (MFSIFKKKTS…TNDSPWQDPT (61 aa)) are Cytoplasmic-facing. A helical membrane pass occupies residues 62-82 (YFSSFGKELMFIATCMLAQLL). Residues 83–108 (NQAGQTHALCIMNVLSKSFNSEANNQ) lie on the Extracellular side of the membrane. A helical transmembrane segment spans residues 109 to 129 (AWLMASFPLAAGSFILISGRL). Over 130–131 (GD) the chain is Cytoplasmic. A helical membrane pass occupies residues 132–152 (IYGLKKMLIVGYVIVIVWSII). The Extracellular portion of the chain corresponds to 153–169 (SGLSKYSNSDAFFITSR). The helical transmembrane segment at 170–190 (AFQGVGIAFILPNIMGLVGHV) threads the bilayer. Topologically, residues 191–203 (YKVGSFRKNIVIS) are cytoplasmic. A helical membrane pass occupies residues 204–224 (FIGACAPTGGMFGGLFGGLIV). Topologically, residues 225 to 232 (TEDPNQWP) are extracellular. A helical membrane pass occupies residues 233-253 (WVFYAFGIATFLSLLMAWYSI). The Cytoplasmic segment spans residues 254-272 (PNNVPTNIHGLSMDWTGSA). A helical transmembrane segment spans residues 273–293 (LAIIGLILFNFVWNQAPIVGW). Residues 294–295 (DK) lie on the Extracellular side of the membrane. The helical transmembrane segment at 296 to 316 (PYIIVLLIISVIFLVAFFVYE) threads the bilayer. Residues 317 to 334 (SKYAEVPLLPRAMTKNRH) are Cytoplasmic-facing. A helical transmembrane segment spans residues 335-355 (MIMILLAVFLGWGSFGIWTFY). The Extracellular portion of the chain corresponds to 356-372 (YVSFQLNLRHYSPVWTG). Residues 373 to 393 (GTYFVFVIFGSMAAFFVAFSI) traverse the membrane as a helical segment. Residues 394–398 (KRLGP) lie on the Cytoplasmic side of the membrane. Residues 399–419 (ALLLCFSLMAFDAGSIMFSVL) form a helical membrane-spanning segment. The Extracellular portion of the chain corresponds to 420-429 (PVEQSYWKLN). A helical transmembrane segment spans residues 430–450 (FAMQAILCFGMDLSFPASSII). Residues 451-461 (LSDGLPMQYQG) lie on the Cytoplasmic side of the membrane. A helical transmembrane segment spans residues 462–482 (MAGSLVNTVINYSASLCLGMG). Residues 483-502 (GTVEHQINKSGNDLLKGYRA) lie on the Extracellular side of the membrane. Residues 503-523 (AVYLGVGLASLGVVISVTYML) traverse the membrane as a helical segment. Residues 524–540 (ENLWNRHRKSEDRSLEA) lie on the Cytoplasmic side of the membrane.

This sequence belongs to the major facilitator superfamily.

Its subcellular location is the membrane. This is an uncharacterized protein from Saccharomyces cerevisiae (strain ATCC 204508 / S288c) (Baker's yeast).